The sequence spans 53 residues: UPF0391 membrane protein BamMC406_6344 (53 aa).

The next 2 membrane-spanning stretches (helical) occupy residues 5 to 25 (AIIFFVIAIIAAVFGFGGIAA) and 30 to 50 (IAKILFYIFVVIFLVTLLLGV).

This sequence belongs to the UPF0391 family.

Its subcellular location is the cell membrane. The protein is UPF0391 membrane protein BamMC406_6344 of Burkholderia ambifaria (strain MC40-6).